Here is a 299-residue protein sequence, read N- to C-terminus: 4-diphosphocytidyl-2-C-methyl-D-erythritol kinase (299 aa).

Residue Lys18 is part of the active site. Position 104-114 (104-114 (PIASGIGGGSS)) interacts with ATP. Residue Asp146 is part of the active site.

It belongs to the GHMP kinase family. IspE subfamily.

It carries out the reaction 4-CDP-2-C-methyl-D-erythritol + ATP = 4-CDP-2-C-methyl-D-erythritol 2-phosphate + ADP + H(+). It participates in isoprenoid biosynthesis; isopentenyl diphosphate biosynthesis via DXP pathway; isopentenyl diphosphate from 1-deoxy-D-xylulose 5-phosphate: step 3/6. Its function is as follows. Catalyzes the phosphorylation of the position 2 hydroxy group of 4-diphosphocytidyl-2C-methyl-D-erythritol. This chain is 4-diphosphocytidyl-2-C-methyl-D-erythritol kinase, found in Brucella abortus biovar 1 (strain 9-941).